The sequence spans 558 residues: Ankyrin repeat protein OPG189 (558 aa).

7 ANK repeats span residues 65–95 (YGEN…NINK), 169–205 (YGCT…DVDK), 209–239 (YGNT…NIDS), 243–272 (NRYT…NVNA), 276–304 (FGTT…ELEI), 339–368 (YNET…DFET), and 372–401 (SGCT…SLKI).

This sequence belongs to the orthopoxvirus OPG189 protein family.

Contributes to viral release without involving rearrangement of host actin. The sequence is that of Ankyrin repeat protein OPG189 (OPG189) from Vaccinia virus (strain Western Reserve) (VACV).